Here is a 546-residue protein sequence, read N- to C-terminus: Chaperonin GroEL (546 aa).

Residues 29-32 (TLGP), Lys-50, 86-90 (DGTTT), Gly-415, and Asp-495 each bind ATP.

The protein belongs to the chaperonin (HSP60) family. In terms of assembly, forms a cylinder of 14 subunits composed of two heptameric rings stacked back-to-back. Interacts with the co-chaperonin GroES.

The protein localises to the cytoplasm. It catalyses the reaction ATP + H2O + a folded polypeptide = ADP + phosphate + an unfolded polypeptide.. Functionally, together with its co-chaperonin GroES, plays an essential role in assisting protein folding. The GroEL-GroES system forms a nano-cage that allows encapsulation of the non-native substrate proteins and provides a physical environment optimized to promote and accelerate protein folding. In Parabacteroides distasonis (strain ATCC 8503 / DSM 20701 / CIP 104284 / JCM 5825 / NCTC 11152), this protein is Chaperonin GroEL.